Consider the following 243-residue polypeptide: Pyridoxine 5'-phosphate synthase (243 aa).

N9 is a binding site for 3-amino-2-oxopropyl phosphate. Residue D11–H12 coordinates 1-deoxy-D-xylulose 5-phosphate. R20 contributes to the 3-amino-2-oxopropyl phosphate binding site. The active-site Proton acceptor is the H45. Residues R47 and H52 each contribute to the 1-deoxy-D-xylulose 5-phosphate site. E72 (proton acceptor) is an active-site residue. T102 serves as a coordination point for 1-deoxy-D-xylulose 5-phosphate. The active-site Proton donor is H193. 3-amino-2-oxopropyl phosphate contacts are provided by residues G194 and G215–H216.

Belongs to the PNP synthase family. Homooctamer; tetramer of dimers.

The protein localises to the cytoplasm. It catalyses the reaction 3-amino-2-oxopropyl phosphate + 1-deoxy-D-xylulose 5-phosphate = pyridoxine 5'-phosphate + phosphate + 2 H2O + H(+). Its pathway is cofactor biosynthesis; pyridoxine 5'-phosphate biosynthesis; pyridoxine 5'-phosphate from D-erythrose 4-phosphate: step 5/5. Its function is as follows. Catalyzes the complicated ring closure reaction between the two acyclic compounds 1-deoxy-D-xylulose-5-phosphate (DXP) and 3-amino-2-oxopropyl phosphate (1-amino-acetone-3-phosphate or AAP) to form pyridoxine 5'-phosphate (PNP) and inorganic phosphate. The chain is Pyridoxine 5'-phosphate synthase from Photobacterium profundum (strain SS9).